Reading from the N-terminus, the 294-residue chain is Undecaprenyl-diphosphatase (294 aa).

A run of 9 helical transmembrane segments spans residues 2–22 (SMIYITLNIIAYVIDVRSLIL), 27–47 (LVFSLILGIVEGLTEFLPISS), 65–85 (VIAFTVIIQLGAILSITKIFW), 110–130 (LCIRHIFLGTFPGIMLGMIFY), 135–155 (LIFELTYIMYGLIIGGIFLLV), 172–192 (ITYLQAFLIGCFQCLAFWPGF), 215–235 (FSFFLAVPIIFGSAVLTLYHY), 239–259 (IGLMDVLLLIAGSATAFFIAL), and 272–292 (VSLIPFAIYRFLLAGGIYWGL).

It belongs to the UppP family.

The protein resides in the cell inner membrane. It carries out the reaction di-trans,octa-cis-undecaprenyl diphosphate + H2O = di-trans,octa-cis-undecaprenyl phosphate + phosphate + H(+). Its function is as follows. Catalyzes the dephosphorylation of undecaprenyl diphosphate (UPP). Confers resistance to bacitracin. This chain is Undecaprenyl-diphosphatase, found in Blochmanniella pennsylvanica (strain BPEN).